We begin with the raw amino-acid sequence, 260 residues long: Thrombin-like enzyme 2 (260 aa).

Residues 1–18 (MMLIRVLANLLILQLSYA) form the signal peptide. The propeptide occupies 19-24 (QKSSEL). One can recognise a Peptidase S1 domain in the interval 25 to 251 (VIGGDECNIN…HLDWIQSIIA (227 aa)). Intrachain disulfides connect C31/C165, C52/C68, C102/C258, C144/C212, C176/C191, and C202/C227. Catalysis depends on H67, which acts as the Charge relay system. N105 is a glycosylation site (N-linked (GlcNAc...) asparagine). The active-site Charge relay system is the D112. N-linked (GlcNAc...) asparagine glycans are attached at residues N156 and N172. S206 (charge relay system) is an active-site residue. A glycan (N-linked (GlcNAc...) asparagine) is linked at N253.

It belongs to the peptidase S1 family. Snake venom subfamily. In terms of assembly, monomer. As to expression, expressed by the venom gland.

It is found in the secreted. Thrombin-like snake venom serine protease. This Trimeresurus albolabris (White-lipped pit viper) protein is Thrombin-like enzyme 2.